A 604-amino-acid polypeptide reads, in one-letter code: ERAD-associated E3 ubiquitin-protein ligase component HRD3B (604 aa).

Residues 1–25 (MRVSGQSIIAISLFTLSLYIHRVQA) form the signal peptide. The segment at 48 to 69 (ESSDFDEFGESEPKSEEELDPG) is disordered. N-linked (GlcNAc...) asparagine glycosylation is found at Asn78 and Asn105. Sel1-like repeat units lie at residues 125 to 160 (PHAQ…AGGN), 244 to 274 (VAMH…FSKA), 279 to 307 (LGYL…AANN), 311 to 344 (SGHY…ANAG), 346 to 380 (PKAF…AERG), 464 to 492 (AALL…YMYA), and 498 to 528 (AQAM…YDQA). N-linked (GlcNAc...) asparagine glycosylation is present at Asn293.

Belongs to the sel-1 family.

In terms of biological role, may be involved in the endoplasmic reticulum (ER) quality control system called ER-associated degradation (ERAD). In Arabidopsis thaliana (Mouse-ear cress), this protein is ERAD-associated E3 ubiquitin-protein ligase component HRD3B.